The chain runs to 436 residues: Enolase 1 (436 aa).

Ser40 serves as a coordination point for Mg(2+). Cys147 and Cys169 are joined by a disulfide. 2 residues coordinate (2R)-2-phosphoglycerate: Gln164 and Glu208. The Proton donor role is filled by Glu208. Asp243, Glu296, and Asp322 together coordinate Mg(2+). Residue Asp322 coordinates (2R)-2-phosphoglycerate. Catalysis depends on Lys347, which acts as the Proton acceptor. Positions 376 and 377 each coordinate (2R)-2-phosphoglycerate.

The protein belongs to the enolase family. As to quaternary structure, homodimer. Homotetramer. Interacts with methyltransferase METH; the interaction inhibits METH catalytic activity; 2-phosphoglycerate binding to ENO prevents the interaction with METH. Mg(2+) is required as a cofactor.

It localises to the cytoplasm. The protein localises to the nucleus. It carries out the reaction (2R)-2-phosphoglycerate = phosphoenolpyruvate + H2O. Its pathway is carbohydrate degradation; glycolysis; pyruvate from D-glyceraldehyde 3-phosphate: step 4/5. In terms of biological role, glycolytic enzyme that catalyzes the conversion of 2-phosphoglycerate to phosphoenolpyruvate. Inhibits tRNA methyltransferase METH catalytic activity in the absence of 2-phosphoglycerate. This is Enolase 1 from Entamoeba histolytica (strain ATCC 30459 / HM-1:IMSS / ABRM).